The sequence spans 370 residues: UDP-3-O-acylglucosamine N-acyltransferase (370 aa).

Catalysis depends on H252, which acts as the Proton acceptor. Residues A350–A370 form a disordered region. The segment covering A358–A370 has biased composition (low complexity).

This sequence belongs to the transferase hexapeptide repeat family. LpxD subfamily. In terms of assembly, homotrimer.

It carries out the reaction a UDP-3-O-[(3R)-3-hydroxyacyl]-alpha-D-glucosamine + a (3R)-hydroxyacyl-[ACP] = a UDP-2-N,3-O-bis[(3R)-3-hydroxyacyl]-alpha-D-glucosamine + holo-[ACP] + H(+). It participates in bacterial outer membrane biogenesis; LPS lipid A biosynthesis. In terms of biological role, catalyzes the N-acylation of UDP-3-O-acylglucosamine using 3-hydroxyacyl-ACP as the acyl donor. Is involved in the biosynthesis of lipid A, a phosphorylated glycolipid that anchors the lipopolysaccharide to the outer membrane of the cell. The chain is UDP-3-O-acylglucosamine N-acyltransferase from Paraburkholderia xenovorans (strain LB400).